A 479-amino-acid polypeptide reads, in one-letter code: tRNA-2-methylthio-N(6)-dimethylallyladenosine synthase (479 aa).

The 117-residue stretch at 6 to 122 (KTVYIKTVGC…IPDMLTKVTS (117 aa)) folds into the MTTase N-terminal domain. The [4Fe-4S] cluster site is built by Cys15, Cys51, Cys85, Cys172, Cys176, and Cys179. The Radical SAM core domain occupies 158–390 (RPTPFQAYLR…LAVQDRISKE (233 aa)). Residues 393–464 (QKLIGDTVEV…SHTLIGRVKT (72 aa)) form the TRAM domain.

This sequence belongs to the methylthiotransferase family. MiaB subfamily. As to quaternary structure, monomer. [4Fe-4S] cluster is required as a cofactor.

Its subcellular location is the cytoplasm. The enzyme catalyses N(6)-dimethylallyladenosine(37) in tRNA + (sulfur carrier)-SH + AH2 + 2 S-adenosyl-L-methionine = 2-methylsulfanyl-N(6)-dimethylallyladenosine(37) in tRNA + (sulfur carrier)-H + 5'-deoxyadenosine + L-methionine + A + S-adenosyl-L-homocysteine + 2 H(+). In terms of biological role, catalyzes the methylthiolation of N6-(dimethylallyl)adenosine (i(6)A), leading to the formation of 2-methylthio-N6-(dimethylallyl)adenosine (ms(2)i(6)A) at position 37 in tRNAs that read codons beginning with uridine. In Rhodopirellula baltica (strain DSM 10527 / NCIMB 13988 / SH1), this protein is tRNA-2-methylthio-N(6)-dimethylallyladenosine synthase.